We begin with the raw amino-acid sequence, 165 residues long: Lipoprotein signal peptidase (165 aa).

4 helical membrane passes run 11–31 (YWVLALAAIVLDQWSKWAVLS), 41–61 (VIPSFFDLTLVYNPGAAFSFL), 64–84 (QGGWQKYFFLVLAVAVSAYLV), and 92–112 (FATLGKTGAAMIIGGALGNVI). Catalysis depends on residues aspartate 122 and aspartate 140. A helical membrane pass occupies residues 132-152 (FYPAFNIADSFICVGAVLAVL).

This sequence belongs to the peptidase A8 family.

The protein resides in the cell inner membrane. It catalyses the reaction Release of signal peptides from bacterial membrane prolipoproteins. Hydrolyzes -Xaa-Yaa-Zaa-|-(S,diacylglyceryl)Cys-, in which Xaa is hydrophobic (preferably Leu), and Yaa (Ala or Ser) and Zaa (Gly or Ala) have small, neutral side chains.. The protein operates within protein modification; lipoprotein biosynthesis (signal peptide cleavage). This protein specifically catalyzes the removal of signal peptides from prolipoproteins. This is Lipoprotein signal peptidase from Neisseria meningitidis serogroup A / serotype 4A (strain DSM 15465 / Z2491).